The sequence spans 103 residues: Histone H4 (103 aa).

The span at 1-14 (MTGRGKGGKGLGKG) shows a compositional bias: gly residues. A disordered region spans residues 1–20 (MTGRGKGGKGLGKGGAKRHR). Lysine 6 is subject to N6-acetyl-N6-methyllysine; alternate. Lysine 6, lysine 9, and lysine 13 each carry N6-methyllysine; alternate. N6-acetyl-N6-methyllysine; alternate is present on lysine 13. A DNA-binding region spans residues 17–21 (KRHRK). Lysine 92 is subject to N6-glutaryllysine.

Belongs to the histone H4 family. As to quaternary structure, the nucleosome is a histone octamer containing two molecules each of H2A, H2B, H3 and H4 assembled in one H3-H4 heterotetramer and two H2A-H2B heterodimers. The octamer wraps approximately 147 bp of DNA. In terms of processing, glutarylation at Lys-92 (H4K91glu) destabilizes nucleosomes by promoting dissociation of the H2A-H2B dimers from nucleosomes.

The protein localises to the nucleus. It is found in the chromosome. Its function is as follows. Core component of nucleosome. Nucleosomes wrap and compact DNA into chromatin, limiting DNA accessibility to the cellular machineries which require DNA as a template. Histones thereby play a central role in transcription regulation, DNA repair, DNA replication and chromosomal stability. DNA accessibility is regulated via a complex set of post-translational modifications of histones, also called histone code, and nucleosome remodeling. This Neurospora crassa (strain ATCC 24698 / 74-OR23-1A / CBS 708.71 / DSM 1257 / FGSC 987) protein is Histone H4 (hH4-1).